Here is a 255-residue protein sequence, read N- to C-terminus: Na(+)-translocating NADH-quinone reductase subunit C (255 aa).

The helical transmembrane segment at 12–32 (LFVVIALSLVCSIIVSTAAVG) threads the bilayer. Threonine 223 carries the FMN phosphoryl threonine modification.

The protein belongs to the NqrC family. As to quaternary structure, composed of six subunits; NqrA, NqrB, NqrC, NqrD, NqrE and NqrF. The cofactor is FMN.

The protein resides in the cell inner membrane. The enzyme catalyses a ubiquinone + n Na(+)(in) + NADH + H(+) = a ubiquinol + n Na(+)(out) + NAD(+). Functionally, NQR complex catalyzes the reduction of ubiquinone-1 to ubiquinol by two successive reactions, coupled with the transport of Na(+) ions from the cytoplasm to the periplasm. NqrA to NqrE are probably involved in the second step, the conversion of ubisemiquinone to ubiquinol. This Vibrio anguillarum (Listonella anguillarum) protein is Na(+)-translocating NADH-quinone reductase subunit C.